Here is a 311-residue protein sequence, read N- to C-terminus: 4-hydroxy-3-methylbut-2-enyl diphosphate reductase (311 aa).

Residue Cys12 coordinates [4Fe-4S] cluster. His41 and His74 together coordinate (2E)-4-hydroxy-3-methylbut-2-enyl diphosphate. Residues His41 and His74 each coordinate dimethylallyl diphosphate. 2 residues coordinate isopentenyl diphosphate: His41 and His74. Position 96 (Cys96) interacts with [4Fe-4S] cluster. His124 contributes to the (2E)-4-hydroxy-3-methylbut-2-enyl diphosphate binding site. Position 124 (His124) interacts with dimethylallyl diphosphate. Position 124 (His124) interacts with isopentenyl diphosphate. The active-site Proton donor is the Glu126. Position 168 (Thr168) interacts with (2E)-4-hydroxy-3-methylbut-2-enyl diphosphate. Cys198 contributes to the [4Fe-4S] cluster binding site. (2E)-4-hydroxy-3-methylbut-2-enyl diphosphate is bound by residues Ser226, Ser227, Asn228, and Ser270. The dimethylallyl diphosphate site is built by Ser226, Ser227, Asn228, and Ser270. Isopentenyl diphosphate contacts are provided by Ser226, Ser227, Asn228, and Ser270.

This sequence belongs to the IspH family. Requires [4Fe-4S] cluster as cofactor.

The catalysed reaction is isopentenyl diphosphate + 2 oxidized [2Fe-2S]-[ferredoxin] + H2O = (2E)-4-hydroxy-3-methylbut-2-enyl diphosphate + 2 reduced [2Fe-2S]-[ferredoxin] + 2 H(+). The enzyme catalyses dimethylallyl diphosphate + 2 oxidized [2Fe-2S]-[ferredoxin] + H2O = (2E)-4-hydroxy-3-methylbut-2-enyl diphosphate + 2 reduced [2Fe-2S]-[ferredoxin] + 2 H(+). The protein operates within isoprenoid biosynthesis; dimethylallyl diphosphate biosynthesis; dimethylallyl diphosphate from (2E)-4-hydroxy-3-methylbutenyl diphosphate: step 1/1. Its pathway is isoprenoid biosynthesis; isopentenyl diphosphate biosynthesis via DXP pathway; isopentenyl diphosphate from 1-deoxy-D-xylulose 5-phosphate: step 6/6. Catalyzes the conversion of 1-hydroxy-2-methyl-2-(E)-butenyl 4-diphosphate (HMBPP) into a mixture of isopentenyl diphosphate (IPP) and dimethylallyl diphosphate (DMAPP). Acts in the terminal step of the DOXP/MEP pathway for isoprenoid precursor biosynthesis. The chain is 4-hydroxy-3-methylbut-2-enyl diphosphate reductase from Saccharophagus degradans (strain 2-40 / ATCC 43961 / DSM 17024).